The following is a 144-amino-acid chain: Large ribosomal subunit protein uL15 (144 aa).

The interval 1–54 (MRLNTLSPAEGSKKAGKRLGRGIGSGLGKTGGRGHKGQKSRSGGGVRRGFEGGQ) is disordered. Gly residues predominate over residues 21–31 (RGIGSGLGKTG).

Belongs to the universal ribosomal protein uL15 family. As to quaternary structure, part of the 50S ribosomal subunit.

Its function is as follows. Binds to the 23S rRNA. This is Large ribosomal subunit protein uL15 from Salmonella enteritidis PT4 (strain P125109).